Consider the following 199-residue polypeptide: Small ribosomal subunit protein eS1 (199 aa).

It belongs to the eukaryotic ribosomal protein eS1 family.

This Pyrococcus abyssi (strain GE5 / Orsay) protein is Small ribosomal subunit protein eS1.